The chain runs to 434 residues: Eukaryotic translation initiation factor 3 subunit E (434 aa).

The PCI domain occupies 219 to 392; it reads FFNHPKGRDL…GHVVMGTQPL (174 aa).

It belongs to the eIF-3 subunit E family. In terms of assembly, component of the eukaryotic translation initiation factor 3 (eIF-3) complex. The eIF-3 complex interacts with pix. Interacts with mxt.

It localises to the cytoplasm. Functionally, component of the eukaryotic translation initiation factor 3 (eIF-3) complex, which is involved in protein synthesis of a specialized repertoire of mRNAs and, together with other initiation factors, stimulates binding of mRNA and methionyl-tRNAi to the 40S ribosome. The eIF-3 complex specifically targets and initiates translation of a subset of mRNAs involved in cell proliferation. The sequence is that of Eukaryotic translation initiation factor 3 subunit E (eIF3-S6) from Drosophila persimilis (Fruit fly).